The chain runs to 338 residues: Glycerol-3-phosphate dehydrogenase [NAD(P)+] (338 aa).

NADPH contacts are provided by serine 13, tryptophan 14, and lysine 108. Sn-glycerol 3-phosphate is bound by residues lysine 108, glycine 139, and serine 141. An NADPH-binding site is contributed by alanine 143. Lysine 194, aspartate 247, serine 257, arginine 258, and asparagine 259 together coordinate sn-glycerol 3-phosphate. The Proton acceptor role is filled by lysine 194. Arginine 258 is an NADPH binding site. 2 residues coordinate NADPH: valine 282 and glutamate 284.

It belongs to the NAD-dependent glycerol-3-phosphate dehydrogenase family.

Its subcellular location is the cytoplasm. It catalyses the reaction sn-glycerol 3-phosphate + NAD(+) = dihydroxyacetone phosphate + NADH + H(+). It carries out the reaction sn-glycerol 3-phosphate + NADP(+) = dihydroxyacetone phosphate + NADPH + H(+). It functions in the pathway membrane lipid metabolism; glycerophospholipid metabolism. Functionally, catalyzes the reduction of the glycolytic intermediate dihydroxyacetone phosphate (DHAP) to sn-glycerol 3-phosphate (G3P), the key precursor for phospholipid synthesis. The polypeptide is Glycerol-3-phosphate dehydrogenase [NAD(P)+] (Streptococcus agalactiae serotype V (strain ATCC BAA-611 / 2603 V/R)).